A 137-amino-acid polypeptide reads, in one-letter code: Small ribosomal subunit protein uS12 (137 aa).

D89 carries the 3-methylthioaspartic acid modification. The segment at 104 to 137 is disordered; sequence TAGVNGRKQSRSKYGAKRPKPGQAAAAPAKGKKK. The segment covering 111 to 123 has biased composition (basic residues); sequence KQSRSKYGAKRPK. The segment covering 124–137 has biased composition (low complexity); that stretch reads PGQAAAAPAKGKKK.

Belongs to the universal ribosomal protein uS12 family. As to quaternary structure, part of the 30S ribosomal subunit. Contacts proteins S8 and S17. May interact with IF1 in the 30S initiation complex.

Its function is as follows. With S4 and S5 plays an important role in translational accuracy. Functionally, interacts with and stabilizes bases of the 16S rRNA that are involved in tRNA selection in the A site and with the mRNA backbone. Located at the interface of the 30S and 50S subunits, it traverses the body of the 30S subunit contacting proteins on the other side and probably holding the rRNA structure together. The combined cluster of proteins S8, S12 and S17 appears to hold together the shoulder and platform of the 30S subunit. The chain is Small ribosomal subunit protein uS12 from Cytophaga hutchinsonii (strain ATCC 33406 / DSM 1761 / CIP 103989 / NBRC 15051 / NCIMB 9469 / D465).